The chain runs to 408 residues: Arginine biosynthesis bifunctional protein ArgJ (408 aa).

Residues T156, K182, T193, E279, N403, and S408 each coordinate substrate. Catalysis depends on T193, which acts as the Nucleophile.

This sequence belongs to the ArgJ family. In terms of assembly, heterotetramer of two alpha and two beta chains.

It localises to the cytoplasm. The catalysed reaction is N(2)-acetyl-L-ornithine + L-glutamate = N-acetyl-L-glutamate + L-ornithine. It catalyses the reaction L-glutamate + acetyl-CoA = N-acetyl-L-glutamate + CoA + H(+). The protein operates within amino-acid biosynthesis; L-arginine biosynthesis; L-ornithine and N-acetyl-L-glutamate from L-glutamate and N(2)-acetyl-L-ornithine (cyclic): step 1/1. Its pathway is amino-acid biosynthesis; L-arginine biosynthesis; N(2)-acetyl-L-ornithine from L-glutamate: step 1/4. Catalyzes two activities which are involved in the cyclic version of arginine biosynthesis: the synthesis of N-acetylglutamate from glutamate and acetyl-CoA as the acetyl donor, and of ornithine by transacetylation between N(2)-acetylornithine and glutamate. The chain is Arginine biosynthesis bifunctional protein ArgJ from Dechloromonas aromatica (strain RCB).